A 951-amino-acid chain; its full sequence is Leucine-rich repeat-containing G-protein coupled receptor 4 (951 aa).

A signal peptide spans 1–19 (MPGPLGLLCFLALGLRGSA). Residues 20-544 (EPSGAAPPLC…LLGSWMIRLT (525 aa)) lie on the Extracellular side of the membrane. Residues 25–57 (APPLCAAPCSCDGDRRVDCSGKGLTAVPEGLSA) form the LRRNT domain. 2 cysteine pairs are disulfide-bonded: Cys-29–Cys-35 and Cys-33–Cys-43. 11 LRR repeats span residues 35 to 58 (CDGDRRVDCSGKGLTAVPEGLSAF), 59 to 79 (TQLLDISMNNITQLPEDAFKN), 81 to 103 (PFLEELRLAGNDLSFIHPKALSG), 104 to 127 (LKELKVLTLQNNQLKTVPSEAIRG), 128 to 151 (LSSLQSLRLDANHITSVPEDSFEG), 153 to 175 (TQLRHLWLDDNSLTEVPVHPLSN), 176 to 199 (LPTLQALTLALNKISSIPDFAFTN), 201 to 223 (SSLVVLHLHNNKIKSLGQHCFDG), 224 to 247 (LDNLETLDLNYNNLGEFPQAIKAL), 248 to 270 (PSLKELLFHSNSISVIPDGAFDG), and 272 to 294 (PLLKTIHLYDNPLSFVGNSAFHN). N-linked (GlcNAc...) asparagine glycosylation is present at Asn-68. An N-linked (GlcNAc...) asparagine glycan is attached at Asn-199. 2 N-linked (GlcNAc...) asparagine glycosylation sites follow: Asn-294 and Asn-314. LRR repeat units lie at residues 318 to 341 (TVRLESLTLTGTKISSISNNLCQE), 342 to 363 (QKRLRTLDLSYNSIKDLPSFNG), 364 to 387 (CHALEEISLQRNQIHQIKEDTFQG), 388 to 411 (LTSLKILDLSRNLIHEIDDRAFAK), and 413 to 435 (GSITNLDVSFNELTSFPTEGLNG). A disulfide bridge links Cys-339 with Cys-364. Disulfide bonds link Cys-470-Cys-522 and Cys-471-Cys-476. The chain crosses the membrane as a helical span at residues 545-565 (VWFIFLVALFFNLLVILTTFA). Residues 566–575 (SCTSVPSSKL) are Cytoplasmic-facing. A helical membrane pass occupies residues 576–596 (FIGLISVSNLFMGAYTGILTF). At 597 to 619 (LDAVSWGRFAEFGIWWEIGSGCK) the chain is on the extracellular side. Residues Cys-618 and Cys-693 are joined by a disulfide bond. A helical membrane pass occupies residues 620 to 640 (IAGFLAVFSSESAIFLLMLAA). Residues 641–661 (VERSLSAKDMMKNGKSNHLRQ) lie on the Cytoplasmic side of the membrane. The helical transmembrane segment at 662–682 (FRIAALLAFLGAAVAGSFPLF) threads the bilayer. The Extracellular portion of the chain corresponds to 683–703 (HRGEYSASPLCLPFPTGETPS). A helical membrane pass occupies residues 704 to 724 (LGFTVTLVLLNSLAFLLMAII). Over 725-756 (YTKLYCNLEKEDLSESSQSSMIKHVAWLIFTN) the chain is Cytoplasmic. The helical transmembrane segment at 757 to 777 (CIFFCPVAFFSFAPLITAVSI) threads the bilayer. Residues 778-783 (SPEIMK) lie on the Extracellular side of the membrane. The chain crosses the membrane as a helical span at residues 784-804 (SVTLIFFPLPACLNPVLYVFF). The Cytoplasmic segment spans residues 805–951 (NPKFKEDWKL…YAYNLPRVKD (147 aa)). Phosphoserine is present on Ser-920.

The protein belongs to the G-protein coupled receptor 1 family.

The protein localises to the cell membrane. Functionally, receptor for R-spondins that potentiates the canonical Wnt signaling pathway and is involved in the formation of various organs. Upon binding to R-spondins (RSPO1, RSPO2, RSPO3 or RSPO4), associates with phosphorylated LRP6 and frizzled receptors that are activated by extracellular Wnt receptors, triggering the canonical Wnt signaling pathway to increase expression of target genes. In contrast to classical G-protein coupled receptors, does not activate heterotrimeric G-proteins to transduce the signal. Its function as activator of the Wnt signaling pathway is required for the development of various organs, including liver, kidney, intestine, bone, reproductive tract and eye. May also act as a receptor for norrin (NDP), such results however required additional confirmation in vivo. Required during spermatogenesis to activate the Wnt signaling pathway in peritubular myoid cells. Required for the maintenance of intestinal stem cells and Paneth cell differentiation in postnatal intestinal crypts. Acts as a regulator of bone formation and remodeling. Involved in kidney development; required for maintaining the ureteric bud in an undifferentiated state. Involved in the development of the anterior segment of the eye. Required during erythropoiesis. Also acts as a negative regulator of innate immunity by inhibiting TLR2/TLR4 associated pattern-recognition and pro-inflammatory cytokine production. Plays an important role in regulating the circadian rhythms of plasma lipids, partially through regulating the rhythmic expression of MTTP. Required for proper development of GnRH neurons (gonadotropin-releasing hormone expressing neurons) that control the release of reproductive hormones from the pituitary gland. The protein is Leucine-rich repeat-containing G-protein coupled receptor 4 (LGR4) of Bos taurus (Bovine).